The primary structure comprises 407 residues: MSIENKNTGVKKVVLAYSGGLDTSAIIPWLKENYDNCEIIAFCADVGQGEEELVGLTEKALASGASECHIVDLKEEFVKDYIYPTMATGAIYEGTYLLGTSMARPIIAKAQVEVARKVGADALCHGCTGKGNDQVRFEGCFAALAPDLKVIAPWREWTMQSREDLLDYLAERNIKTSASATKIYSRDANAFHISHEGGELEDPWNEPSKGVWTLTADPEDAPNQPEYVSLEVENGRVTKVNGEALTPYAALMKLNAIAAPHGVGRIDITENRLVGMKSRGCYETPGGTVMFAALRAIEELVLDKTSRTWREQVGAQMAHLVYDGRWFTPLCKSLLAASESLAESVNGGVVVKLYKGHAIAVKKRSPNSLYSEAFATFGEDQVYDQKHAEGFIRLYSLASRIRALNAK.

Residues 16–24 and Ala44 contribute to the ATP site; that span reads AYSGGLDTS. L-citrulline contacts are provided by Tyr96 and Ser101. Gly126 lines the ATP pocket. Positions 128, 132, and 133 each coordinate L-aspartate. Asn132 contacts L-citrulline. The L-citrulline site is built by Arg136, Ser185, Ser194, Glu270, and Tyr282.

Belongs to the argininosuccinate synthase family. Type 1 subfamily. In terms of assembly, homotetramer.

Its subcellular location is the cytoplasm. It catalyses the reaction L-citrulline + L-aspartate + ATP = 2-(N(omega)-L-arginino)succinate + AMP + diphosphate + H(+). The protein operates within amino-acid biosynthesis; L-arginine biosynthesis; L-arginine from L-ornithine and carbamoyl phosphate: step 2/3. This is Argininosuccinate synthase from Shewanella sp. (strain W3-18-1).